The sequence spans 703 residues: WD repeat-containing protein pop2 (703 aa).

Composition is skewed to polar residues over residues 1-27 (MSLS…SSSP), 63-73 (ESNSCNGNTSS), and 156-178 (SISS…TVSP). 2 disordered regions span residues 1 to 73 (MSLS…NTSS) and 156 to 180 (SISS…SPGS). Positions 1–170 (MSLSRCPTDN…SDNFPPSPKV (170 aa)) are interaction with pop1. The F-box domain maps to 236–283 (KDILSNLPFSIVQSILLNLDIHSFLSCRLVSPTWNRILDVHTSYWKHM). 6 WD repeats span residues 389–417 (GHKE…RVWN), 429–473 (GHIS…RVWK), 505–533 (GHTD…RIWR), 545–575 (GHSL…RVWD), 587–615 (GHDA…RIWD), and 625–654 (LPSN…KLWD).

In terms of assembly, homodimer and heterodimer with pop1. Binds to cul1, pip1 and phosphorylated cdc18.

It localises to the cytoplasm. Its subcellular location is the nucleus. Involved in maintenance of ploidy through proteasome dependent degradation of CDK inhibitor rum1 and S-phase initiator cdc18. Functions as a recognition factor for rum1 and cdc18, which are subsequently ubiquitinated and targeted to the 26S proteasome for degradation. Together with pop1, required for cig2 instability during G2 and M phase and cig2 degradation in exponentially growing cells. The sequence is that of WD repeat-containing protein pop2 (pop2) from Schizosaccharomyces pombe (strain 972 / ATCC 24843) (Fission yeast).